The sequence spans 304 residues: Neurexophilin-4 (304 aa).

The signal sequence occupies residues 1–23; the sequence is MRLLPEWLLLLFGPWLLRKVISG. The interval 24-84 is II; sequence QIVESGRPQY…GALARPGAAG (61 aa). Residues N72, N133, N143, and N149 are each glycosylated (N-linked (GlcNAc...) asparagine). Residues 85-163 are III; sequence GPPVPRTKRK…IVPPSKRVEF (79 aa). The interval 164–220 is IV (linker domain); that stretch reads GGVWLPGPAPHPLQSTLALEGVLPGLGPPLGMAGQGLGGNLGGALAGPLGGALGVPG. The tract at residues 221–304 is v (Cys-rich); it reads AKESRAFNCH…NFQSEHPYFG (84 aa).

The protein belongs to the neurexophilin family. In terms of processing, may be proteolytically processed in neuron-like cells. As to expression, brain and kidney.

The protein localises to the secreted. Its function is as follows. May be signaling molecules that resemble neuropeptides and that act by binding to alpha-neurexins and possibly other receptors. The chain is Neurexophilin-4 (Nxph4) from Rattus norvegicus (Rat).